Consider the following 330-residue polypeptide: Ornithine carbamoyltransferase (330 aa).

Residues 57 to 60 (STRT), Gln-84, Arg-108, and 135 to 138 (HPTQ) contribute to the carbamoyl phosphate site. L-ornithine-binding positions include Asn-168, Asp-232, and 236 to 237 (SM). Residues 273–274 (CL) and Arg-318 each bind carbamoyl phosphate.

Belongs to the aspartate/ornithine carbamoyltransferase superfamily. OTCase family.

The protein localises to the cytoplasm. The enzyme catalyses carbamoyl phosphate + L-ornithine = L-citrulline + phosphate + H(+). Its pathway is amino-acid biosynthesis; L-arginine biosynthesis; L-arginine from L-ornithine and carbamoyl phosphate: step 1/3. Its function is as follows. Reversibly catalyzes the transfer of the carbamoyl group from carbamoyl phosphate (CP) to the N(epsilon) atom of ornithine (ORN) to produce L-citrulline. The polypeptide is Ornithine carbamoyltransferase (Alkaliphilus metalliredigens (strain QYMF)).